Here is a 173-residue protein sequence, read N- to C-terminus: Co-chaperone protein HscB (173 aa).

In terms of domain architecture, J spans Asp-2–Leu-74.

The protein belongs to the HscB family. As to quaternary structure, interacts with HscA and stimulates its ATPase activity. Interacts with IscU.

Co-chaperone involved in the maturation of iron-sulfur cluster-containing proteins. Seems to help targeting proteins to be folded toward HscA. The sequence is that of Co-chaperone protein HscB from Photorhabdus laumondii subsp. laumondii (strain DSM 15139 / CIP 105565 / TT01) (Photorhabdus luminescens subsp. laumondii).